The following is an 89-amino-acid chain: Small ribosomal subunit protein uS15 (89 aa).

Belongs to the universal ribosomal protein uS15 family. In terms of assembly, part of the 30S ribosomal subunit. Forms a bridge to the 50S subunit in the 70S ribosome, contacting the 23S rRNA.

One of the primary rRNA binding proteins, it binds directly to 16S rRNA where it helps nucleate assembly of the platform of the 30S subunit by binding and bridging several RNA helices of the 16S rRNA. In terms of biological role, forms an intersubunit bridge (bridge B4) with the 23S rRNA of the 50S subunit in the ribosome. The protein is Small ribosomal subunit protein uS15 of Chlamydia muridarum (strain MoPn / Nigg).